The primary structure comprises 422 residues: Enolase (422 aa).

Gln-162 lines the (2R)-2-phosphoglycerate pocket. The Proton donor role is filled by Glu-204. Mg(2+) is bound by residues Asp-241, Glu-285, and Asp-312. 4 residues coordinate (2R)-2-phosphoglycerate: Lys-337, Arg-366, Ser-367, and Lys-388. The active-site Proton acceptor is the Lys-337.

It belongs to the enolase family. The cofactor is Mg(2+).

It localises to the cytoplasm. Its subcellular location is the secreted. It is found in the cell surface. It carries out the reaction (2R)-2-phosphoglycerate = phosphoenolpyruvate + H2O. It functions in the pathway carbohydrate degradation; glycolysis; pyruvate from D-glyceraldehyde 3-phosphate: step 4/5. Functionally, catalyzes the reversible conversion of 2-phosphoglycerate (2-PG) into phosphoenolpyruvate (PEP). It is essential for the degradation of carbohydrates via glycolysis. This Streptococcus thermophilus protein is Enolase.